We begin with the raw amino-acid sequence, 459 residues long: Putrescine aminotransferase (459 aa).

Pyridoxal 5'-phosphate is bound by residues 150-151 (GT) and Q274. An N6-(pyridoxal phosphate)lysine modification is found at K300. T332 provides a ligand contact to pyridoxal 5'-phosphate.

Belongs to the class-III pyridoxal-phosphate-dependent aminotransferase family. Putrescine aminotransferase subfamily. Pyridoxal 5'-phosphate is required as a cofactor.

The enzyme catalyses an alkane-alpha,omega-diamine + 2-oxoglutarate = an omega-aminoaldehyde + L-glutamate. The catalysed reaction is putrescine + 2-oxoglutarate = 1-pyrroline + L-glutamate + H2O. It carries out the reaction cadaverine + 2-oxoglutarate = 5-aminopentanal + L-glutamate. The protein operates within amine and polyamine degradation; putrescine degradation; 4-aminobutanal from putrescine (transaminase route): step 1/1. Functionally, catalyzes the aminotransferase reaction from putrescine to 2-oxoglutarate, leading to glutamate and 4-aminobutanal, which spontaneously cyclizes to form 1-pyrroline. This is the first step in one of two pathways for putrescine degradation, where putrescine is converted into 4-aminobutanoate (gamma-aminobutyrate or GABA) via 4-aminobutanal. Also functions as a cadaverine transaminase in a a L-lysine degradation pathway to succinate that proceeds via cadaverine, glutarate and L-2-hydroxyglutarate. In Salmonella dublin (strain CT_02021853), this protein is Putrescine aminotransferase.